Reading from the N-terminus, the 493-residue chain is uncharacterized protein (493 aa).

8 to 37 (DFLVVGGGTCGCVVAARLSEDPSATVMLLE) lines the FAD pocket. H429 functions as the Proton acceptor in the catalytic mechanism.

It belongs to the GMC oxidoreductase family. The cofactor is FAD.

This is an uncharacterized protein from Rhodococcus erythropolis (Arthrobacter picolinophilus).